The chain runs to 168 residues: Photosystem I assembly protein Ycf3 (168 aa).

TPR repeat units lie at residues 35 to 68, 72 to 105, and 120 to 153; these read AFTY…EIDP, SYIL…NPFL, and GEQA…TPGN.

Belongs to the Ycf3 family.

It is found in the plastid. The protein resides in the chloroplast thylakoid membrane. Its function is as follows. Essential for the assembly of the photosystem I (PSI) complex. May act as a chaperone-like factor to guide the assembly of the PSI subunits. This is Photosystem I assembly protein Ycf3 from Ipomoea purpurea (Common morning glory).